The sequence spans 235 residues: 7-cyano-7-deazaguanine synthase (235 aa).

9 to 19 (FSGGQDSTTCL) contacts ATP. Zn(2+)-binding residues include Cys197, Cys212, Cys215, and Cys218.

This sequence belongs to the QueC family. The cofactor is Zn(2+).

It carries out the reaction 7-carboxy-7-deazaguanine + NH4(+) + ATP = 7-cyano-7-deazaguanine + ADP + phosphate + H2O + H(+). It functions in the pathway purine metabolism; 7-cyano-7-deazaguanine biosynthesis. In terms of biological role, catalyzes the ATP-dependent conversion of 7-carboxy-7-deazaguanine (CDG) to 7-cyano-7-deazaguanine (preQ(0)). In Polaromonas sp. (strain JS666 / ATCC BAA-500), this protein is 7-cyano-7-deazaguanine synthase.